The following is a 120-amino-acid chain: MASRKDTLVRRASRVRRQIKAVANGRPRLSVHRSSKNIYAQIIDDVAGKTIASASTLDTDLRSSLKTGADTEAATAVGKLLAERASKAGIKDVVFDRGAFIYHGRIKALAEAAREGGLNF.

The protein belongs to the universal ribosomal protein uL18 family. In terms of assembly, part of the 50S ribosomal subunit; part of the 5S rRNA/L5/L18/L25 subcomplex. Contacts the 5S and 23S rRNAs.

Functionally, this is one of the proteins that bind and probably mediate the attachment of the 5S RNA into the large ribosomal subunit, where it forms part of the central protuberance. This is Large ribosomal subunit protein uL18 from Rhizobium meliloti (strain 1021) (Ensifer meliloti).